The sequence spans 462 residues: Histidine--tRNA ligase (462 aa).

This sequence belongs to the class-II aminoacyl-tRNA synthetase family. In terms of assembly, homodimer.

Its subcellular location is the cytoplasm. It catalyses the reaction tRNA(His) + L-histidine + ATP = L-histidyl-tRNA(His) + AMP + diphosphate + H(+). The sequence is that of Histidine--tRNA ligase (hisS) from Nostoc sp. (strain PCC 7120 / SAG 25.82 / UTEX 2576).